The sequence spans 889 residues: Phosphatidylinositol 3-kinase VPS34 (889 aa).

Positions 34–184 (ASEKLIDPQL…EWIDELVLKK (151 aa)) constitute a C2 PI3K-type domain. The PIK helical domain maps to 298–540 (SDKHVKPDAK…ESFLSRLNSN (243 aa)). The PI3K/PI4K catalytic domain maps to 607–873 (MIDQCNVFKS…LINDSVNALL (267 aa)). The G-loop stretch occupies residues 613–619 (VFKSSLS). The catalytic loop stretch occupies residues 742–750 (GVGDRHLDN). An activation loop region spans residues 761-782 (HADFGYILGQDPKPFPPLMKLP).

This sequence belongs to the PI3/PI4-kinase family. Type III PI4K subfamily. As to quaternary structure, component of the autophagy-specific VPS34 PI3-kinase complex I composed of VPS15, VPS30, VPS34, ATG14 and ATG38; and of the VPS34 PI3-kinase complex II composed of VPS15, VPS30, VPS34 and VPS38. Autophosphorylated.

The protein resides in the golgi apparatus. It is found in the trans-Golgi network membrane. It localises to the endosome membrane. The enzyme catalyses a 1,2-diacyl-sn-glycero-3-phospho-(1D-myo-inositol) + ATP = a 1,2-diacyl-sn-glycero-3-phospho-(1D-myo-inositol-3-phosphate) + ADP + H(+). Multifunctional phosphatidylinositol 3-kinase that plays a role in signaling in modulation of host immune response, intracellular survival and virulence. Catalytic subunit of the autophagy-specific VPS34 PI3-kinase complex I essential to recruit the ATG8-phosphatidylinositol conjugate and the ATG12-ATG5 conjugate to the pre-autophagosomal structure. Also involved in endosome-to-Golgi retrograde transport as part of the VPS34 PI3-kinase complex II. This second complex is required for the endosome-to-Golgi retrieval of PEP1 and KEX2, and the recruitment of VPS5 and VPS7, two components of the retromer complex, to endosomal membranes (probably through the synthesis of a specific pool of phosphatidylinositol 3-phosphate recruiting the retromer to the endosomes). Finally, it might also be involved in ethanol tolerance and cell wall integrity. The polypeptide is Phosphatidylinositol 3-kinase VPS34 (Candida glabrata (strain ATCC 2001 / BCRC 20586 / JCM 3761 / NBRC 0622 / NRRL Y-65 / CBS 138) (Yeast)).